A 145-amino-acid chain; its full sequence is Eukaryotic translation initiation factor 1A (145 aa).

Residues 1 to 15 (MPKNKGKGGKNRKRG) show a composition bias toward basic residues. Residues 1-25 (MPKNKGKGGKNRKRGKNEADDDKRE) form a disordered region. The segment covering 16-25 (KNEADDDKRE) has biased composition (basic and acidic residues). The S1-like domain occupies 22–96 (DKRELVFKED…DKADVILKLM (75 aa)).

Belongs to the eIF-1A family.

Functionally, seems to be required for maximal rate of protein biosynthesis. Enhances ribosome dissociation into subunits and stabilizes the binding of the initiator Met-tRNA(I) to 40 S ribosomal subunits. The polypeptide is Eukaryotic translation initiation factor 1A (Onobrychis viciifolia (Common sainfoin)).